Here is a 1704-residue protein sequence, read N- to C-terminus: Phospholipid-transporting ATPase ABCA3 (1704 aa).

An N-linked (GlcNAc...) asparagine glycan is attached at Asn14. A helical transmembrane segment spans residues Val22–Leu42. Asn53, Asn124, and Asn140 each carry an N-linked (GlcNAc...) asparagine glycan. 6 helical membrane passes run Tyr261–Val283, Ala307–Phe327, Ser344–Val364, Met373–Ala393, Leu405–Phe425, and Phe447–Thr467. The region spanning Ile530–Val763 is the ABC transporter 1 domain. Gly566 to Thr573 lines the ATP pocket. Residues Asn620 and Asn783 are each glycosylated (N-linked (GlcNAc...) asparagine). 7 consecutive transmembrane segments (helical) span residues Met925–Asn945, Ile1100–Val1120, Ser1144–Phe1164, Leu1183–Phe1203, Leu1213–Ile1233, Leu1245–Tyr1265, and Phe1306–Thr1326. One can recognise an ABC transporter 2 domain in the interval Leu1381–Lys1614. Gly1416–Thr1423 lines the ATP pocket.

Belongs to the ABC transporter superfamily. ABCA family. In terms of assembly, homooligomer; disulfide-linked. In terms of processing, N-glycosylated. Localization at intracellular vesicles is accompanied by processing of oligosaccharide from high mannose type to complex type. N-linked glycosylation at Asn-124 and Asn-140 is required for stability and efficient anterograde trafficking and prevents from proteasomal degradation. Proteolytically cleaved by CTSL and to a lower extent by CTSB within multivesicular bodies (MVB) and lamellar bodies (LB) leading to a mature form of 150 kDa. In terms of tissue distribution, expressed in brain, pancreas, skeletal muscle and heart. Highly expressed in the lung in an AT2-cell-specific manner. Weakly expressed in placenta, kidney and liver. Also expressed in medullary thyroid carcinoma cells (MTC) and in C-cell carcinoma.

It localises to the endosome. The protein resides in the multivesicular body membrane. It is found in the cytoplasmic vesicle membrane. Its subcellular location is the late endosome membrane. The protein localises to the lysosome membrane. It catalyses the reaction ATP + H2O + xenobioticSide 1 = ADP + phosphate + xenobioticSide 2.. The catalysed reaction is a 1,2-diacyl-sn-glycero-3-phosphocholine(in) + ATP + H2O = a 1,2-diacyl-sn-glycero-3-phosphocholine(out) + ADP + phosphate + H(+). The enzyme catalyses ATP + H2O + phospholipidSide 1 = ADP + phosphate + phospholipidSide 2.. It carries out the reaction 1,2-dihexadecanoyl-sn-glycero-3-phosphocholine(in) + ATP + H2O = 1,2-dihexadecanoyl-sn-glycero-3-phosphocholine(out) + ADP + phosphate + H(+). It catalyses the reaction cholesterol(in) + ATP + H2O = cholesterol(out) + ADP + phosphate + H(+). The catalysed reaction is a 1,2-diacyl-sn-glycero-3-phospho-(1'-sn-glycerol)(in) + ATP + H2O = a 1,2-diacyl-sn-glycero-3-phospho-(1'-sn-glycerol)(out) + ADP + phosphate + H(+). Its activity is regulated as follows. The ATP-dependent phosphatidylcholine transport is competitively inhibited by miltefosine. Catalyzes the ATP-dependent transport of phospholipids such as phosphatidylcholine and phosphoglycerol from the cytoplasm into the lumen side of lamellar bodies, in turn participates in the lamellar bodies biogenesis and homeostasis of pulmonary surfactant. Transports preferentially phosphatidylcholine containing short acyl chains. In addition plays a role as an efflux transporter of miltefosine across macrophage membranes and free cholesterol (FC) through intralumenal vesicles by removing FC from the cell as a component of surfactant and protects cells from free cholesterol toxicity. The sequence is that of Phospholipid-transporting ATPase ABCA3 from Homo sapiens (Human).